Here is a 270-residue protein sequence, read N- to C-terminus: Putative phosphoenolpyruvate synthase regulatory protein (270 aa).

An ADP-binding site is contributed by 150–157; the sequence is GVSRCGKT.

The protein belongs to the pyruvate, phosphate/water dikinase regulatory protein family. PSRP subfamily.

It carries out the reaction [pyruvate, water dikinase] + ADP = [pyruvate, water dikinase]-phosphate + AMP + H(+). The enzyme catalyses [pyruvate, water dikinase]-phosphate + phosphate + H(+) = [pyruvate, water dikinase] + diphosphate. Bifunctional serine/threonine kinase and phosphorylase involved in the regulation of the phosphoenolpyruvate synthase (PEPS) by catalyzing its phosphorylation/dephosphorylation. The chain is Putative phosphoenolpyruvate synthase regulatory protein from Shewanella woodyi (strain ATCC 51908 / MS32).